The sequence spans 699 residues: Ubiquitin-like modifier-activating enzyme ATG7 (699 aa).

The GXGXXG motif signature appears at 370–375 (GAGTLG). Cysteine 550 serves as the catalytic Glycyl thioester intermediate. The interval 653–691 (ALASRDYVAELSGLAEVQRLAEKAAAEMQWSEDEEGMGE) is homodimerization.

The protein belongs to the ATG7 family. In terms of assembly, homodimer. Interacts with ATG8 through a thioester bond between Cys-550 and the C-terminal Gly of ATG8 and with ATG12 through a thioester bond between Cys-550 and the C-terminal Gly of ATG12. Also interacts with ATG3.

Its subcellular location is the cytoplasm. The protein localises to the preautophagosomal structure. E1-like activating enzyme involved in the 2 ubiquitin-like systems required for cytoplasm to vacuole transport (Cvt) and autophagy. Activates ATG12 for its conjugation with ATG5 and ATG8 for its conjugation with phosphatidylethanolamine. Both systems are needed for the ATG8 association to Cvt vesicles and autophagosomes membranes. Autophagy is essential for maintenance of amino acid levels and protein synthesis under nitrogen starvation. Required for selective autophagic degradation of the nucleus (nucleophagy) as well as for mitophagy which contributes to regulate mitochondrial quantity and quality by eliminating the mitochondria to a basal level to fulfill cellular energy requirements and preventing excess ROS production. Required for normal mycelial growth and conidiogenesis. The chain is Ubiquitin-like modifier-activating enzyme ATG7 from Sordaria macrospora (strain ATCC MYA-333 / DSM 997 / K(L3346) / K-hell).